Here is a 1863-residue protein sequence, read N- to C-terminus: C-myc promoter-binding protein (1863 aa).

An MABP domain is found at 42-200 (KEPITDVSVI…AVYLCYKKSV (159 aa)). In terms of domain architecture, uDENN spans 192-364 (VYLCYKKSVA…KVPFPSPQRP (173 aa)). The cDENN domain maps to 385–521 (PLPLSGGKFS…PCKNLMNTLN (137 aa)). Positions 523–641 (LHQQLAKLQQ…CSFVSDKDAS (119 aa)) constitute a dDENN domain. Ser-731 carries the post-translational modification Phosphoserine. PPR repeat units follow at residues 772–808 (WFICLPAYVKVCHSKVRALKTAYDVLKKMQSKKMDPP) and 809–843 (DEVCYRILMQLCGQYDQPVLAVRVLFEMQKAGIDP). A disordered region spans residues 905-952 (DLGYNSLSKDEVRRGDTSTEDIQEEKDKKGSDCSSLSESESTKGSADC). Basic and acidic residues predominate over residues 912 to 921 (SKDEVRRGDT). The Bipartite nuclear localization signal motif lies at 917-933 (RRGDTSTEDIQEEKDKK). Residues 936–949 (DCSSLSESESTKGS) are compositionally biased toward low complexity. Ser-1015, Ser-1035, Ser-1099, Ser-1151, and Ser-1152 each carry phosphoserine. The segment at 1075–1111 (TRPNTLDIGKPPLRSKRDSLEKESSDDDTPFDGSNYL) is disordered. The disordered stretch occupies residues 1177 to 1202 (TEQQQKEEEEEDEDDSKSISTPSARR). 3 positions are modified to phosphoserine: Ser-1225, Ser-1240, and Ser-1251. Disordered regions lie at residues 1237–1306 (NKKS…SPSF) and 1348–1375 (SKDQSSDRTSLSSVGAQDSESTSLTDED). Positions 1269-1279 (TKSEEKPRDRL) are enriched in basic and acidic residues. Ser-1281 carries the phosphoserine modification. Polar residues-rich tracts occupy residues 1297 to 1306 (DTLTHSSPSF) and 1348 to 1371 (SKDQSSDRTSLSSVGAQDSESTSL). Phosphoserine occurs at positions 1508, 1587, 1589, and 1591.

As to expression, expressed ubiquitously. Highest expression in bone marrow, medium in peripheral blood lymphocytes and lowest in spleen. In brain, breast, and prostate, higher expression was seen in normal cells than in tumor cells. Expression is regulated in a growth- and cell cycle-dependent manner.

It is found in the nucleus. Probable guanine nucleotide exchange factor (GEF) which may activate RAB10. Promotes the exchange of GDP to GTP, converting inactive GDP-bound Rab proteins into their active GTP-bound form. According to PubMed:8056341, it may bind to ISRE-like element (interferon-stimulated response element) of MYC P2 promoter. In Homo sapiens (Human), this protein is C-myc promoter-binding protein (DENND4A).